The primary structure comprises 176 residues: Ribosome maturation factor RimP (176 aa).

The protein belongs to the RimP family.

Its subcellular location is the cytoplasm. Its function is as follows. Required for maturation of 30S ribosomal subunits. The polypeptide is Ribosome maturation factor RimP (Chlorobium limicola (strain DSM 245 / NBRC 103803 / 6330)).